The chain runs to 1734 residues: Complement C4-A (1734 aa).

A signal peptide spans M1–Q19. A disulfide bond links C66 and C95. N-linked (GlcNAc...) asparagine glycosylation is present at N224. C633 and C667 are joined by a disulfide. Residues R674–R677 constitute a propeptide that is removed on maturation. 3 cysteine pairs are disulfide-bonded: C700/C726, C701/C733, and C714/C734. The Anaphylatoxin-like domain maps to C700–C734. N-linked (GlcNAc...) asparagine glycosylation is found at N743 and N859. Positions C1002–Q1005 form a cross-link, isoglutamyl cysteine thioester (Cys-Gln). N-linked (GlcNAc...) asparagine glycans are attached at residues N1128 and N1383. Y1409 is subject to Sulfotyrosine. Residues R1437 to R1443 constitute a propeptide that is removed on maturation. 5 cysteine pairs are disulfide-bonded: C1461–C1525, C1573–C1578, C1585–C1663, C1608–C1732, and C1708–C1717. One can recognise an NTR domain in the interval C1585–C1732.

As to quaternary structure, in absence of complement activation, circulates in blood as a disulfide-linked trimer of an alpha, beta and gamma chain. In terms of assembly, complement C4b is composed of Complement C4b-A, Complement C4 beta and Complement C4 gamma chains that are associated via disulfide bonds. Non-enzymatic component of the C3 convertase, also named C4bC2b, composed of the serine protease complement C2b (C2), as well as complement C4b. Non-enzymatic component of the C5 convertase, also named C4bC2bC3b, composed of the serine protease complement C2b (C2), complement C3b, as well as complement C4b. In terms of processing, prior to secretion, the single-chain precursor is enzymatically cleaved by plasminogen (PLG) to yield non-identical chains alpha, beta and gamma. During activation of the complement systems, the alpha chain is cleaved into C4a and C4b by different proteases depending on the complement pathway: C4b stays linked to the beta and gamma chains, while C4a is released in the plasma. The alpha chain is cleaved by C1S to generate C4a and C4b following activation by the classical complement system. The alpha chain is cleaved to generate C4a and C4b by MASP2 following activation by the lectin complement system. The alpha chain is cleaved by GZMK to generate C4a and C4b following activation by the GZMK complement system. Further degradation of C4b by C1 into the inactive fragments C4c and C4d blocks the generation of C3 convertase. The proteolytic cleavages often are incomplete so that many structural forms can be found in plasma. Upon activation, the internal thioester bond reacts with carbohydrate antigens on the target surface to form amide or ester bonds, leading to covalent association with the surface of pathogens. Post-translationally, complement C4b interacts with complement C3b via a thioester linkage. In terms of processing, N- and O-glycosylated. O-glycosylated with a core 1 or possibly core 8 glycan.

It localises to the secreted. It is found in the synapse. The protein localises to the cell projection. Its subcellular location is the axon. The protein resides in the dendrite. It localises to the cell surface. Its activity is regulated as follows. Specifically inhibited by nanobody hC4Nb8, inhibiting the classical complement pathway. In terms of biological role, precursor of non-enzymatic components of the classical, lectin and GZMK complement pathways, which consist in a cascade of proteins that leads to phagocytosis and breakdown of pathogens and signaling that strengthens the adaptive immune system. Non-enzymatic component of C3 and C5 convertases. Generated following cleavage by complement proteases (C1S, MASP2 or GZMK, depending on the complement pathway), it covalently attaches to the surface of pathogens, where it acts as an opsonin that marks the surface of antigens for removal. It then recruits the serine protease complement C2b to form the C3 and C5 convertases, which cleave and activate C3 and C5, respectively, the next components of the complement pathways. Complement C4b-A isotype is responsible for effective binding to form amide bonds with immune aggregates or protein antigens, while complement C4b-B isotype catalyzes the transacylation of the thioester carbonyl group to form ester bonds with carbohydrate antigens. Its function is as follows. Putative humoral mediator released following cleavage by complement proteases (C1S, MASP2 or GZMK, depending on the complement pathway). While it is strongly similar to anaphylatoxins, its role is unclear. Was reported to act as a mediator of local inflammatory process; however these effects were probably due to contamination with C3a and/C5a anaphylatoxins in biological assays. The sequence is that of Complement C4-A from Mus musculus (Mouse).